A 103-amino-acid polypeptide reads, in one-letter code: MQNQKIRIRLKAFDYRLIDQSAAEIVDTAKRTGAVVKGPVPLPTRIERFDILRSPHVNKTSRDQLEIRTHLRLMDIVDPTEKTVDALMKLDLPAGVDVEIKLQ.

The protein belongs to the universal ribosomal protein uS10 family. As to quaternary structure, part of the 30S ribosomal subunit.

Its function is as follows. Involved in the binding of tRNA to the ribosomes. This is Small ribosomal subunit protein uS10 from Polynucleobacter asymbioticus (strain DSM 18221 / CIP 109841 / QLW-P1DMWA-1) (Polynucleobacter necessarius subsp. asymbioticus).